The primary structure comprises 93 residues: MSRSIKKPPFCAPHVLRLVNKAIAQNKLNSIINIHSRSSVILNKFIGLTFGVYNGKTYVPVKVNDNMIGRKFGEFSPTRRYTGHVGDKKVSRK.

The protein belongs to the universal ribosomal protein uS19 family.

In terms of biological role, protein S19 forms a complex with S13 that binds strongly to the 16S ribosomal RNA. This is Small ribosomal subunit protein uS19 from Ehrlichia ruminantium (strain Welgevonden).